Here is a 924-residue protein sequence, read N- to C-terminus: Isoleucine--tRNA ligase (924 aa).

Positions Pro58 to His68 match the 'HIGH' region motif. Glu561 is a binding site for L-isoleucyl-5'-AMP. Residues Lys602–Ser606 carry the 'KMSKS' region motif. Position 605 (Lys605) interacts with ATP. 4 residues coordinate Zn(2+): Cys887, Cys890, Cys907, and Cys910.

The protein belongs to the class-I aminoacyl-tRNA synthetase family. IleS type 1 subfamily. Monomer. The cofactor is Zn(2+).

It localises to the cytoplasm. It catalyses the reaction tRNA(Ile) + L-isoleucine + ATP = L-isoleucyl-tRNA(Ile) + AMP + diphosphate. Its function is as follows. Catalyzes the attachment of isoleucine to tRNA(Ile). As IleRS can inadvertently accommodate and process structurally similar amino acids such as valine, to avoid such errors it has two additional distinct tRNA(Ile)-dependent editing activities. One activity is designated as 'pretransfer' editing and involves the hydrolysis of activated Val-AMP. The other activity is designated 'posttransfer' editing and involves deacylation of mischarged Val-tRNA(Ile). This Dichelobacter nodosus (strain VCS1703A) protein is Isoleucine--tRNA ligase.